A 187-amino-acid polypeptide reads, in one-letter code: Elongation factor P (187 aa).

This sequence belongs to the elongation factor P family.

It localises to the cytoplasm. Its pathway is protein biosynthesis; polypeptide chain elongation. Its function is as follows. Involved in peptide bond synthesis. Stimulates efficient translation and peptide-bond synthesis on native or reconstituted 70S ribosomes in vitro. Probably functions indirectly by altering the affinity of the ribosome for aminoacyl-tRNA, thus increasing their reactivity as acceptors for peptidyl transferase. This Helicobacter acinonychis (strain Sheeba) protein is Elongation factor P.